Here is a 490-residue protein sequence, read N- to C-terminus: JNK-interacting protein 1 (490 aa).

Disordered regions lie at residues 1–71 (MADS…DHEP) and 213–254 (EDSS…PVSQ). A compositionally biased stretch (polar residues) spans 231–249 (GHSTAHSPNDFKSMSPQIT). The region spanning 271–332 (MLEATHRGLH…PSAYAVDLDY (62 aa)) is the SH3 domain. The PID domain maps to 344 to 479 (KERYLLGYLG…FQRFYQKFIE (136 aa)).

Belongs to the JIP scaffold family. Forms homo- and heterooligomeric complexes. Binds Hep, a dual specificity protein kinase in the JNK pathway, but not its downstream target bsk. The C-terminal region interacts with the kinesin light chain protein, Klc, and the C-terminal PTY motif of amyloid-beta protein precursor-like protein, Appl. In terms of tissue distribution, expressed in the brain, CNS, PNS and cells posterior to the morphogenetic furrow in the eye imaginal disk of late embryos.

The protein resides in the cytoplasm. In terms of biological role, the JNK-interacting protein (JIP) group of scaffold proteins selectively mediates JNK signaling by aggregating specific components of the MAPK cascade to form a functional JNK signaling module. May function as a regulator of vesicle transport, through interactions with the JNK-signaling components and motor proteins. The protein is JNK-interacting protein 1 (Aplip1) of Drosophila melanogaster (Fruit fly).